The chain runs to 345 residues: NADH-quinone oxidoreductase subunit H (345 aa).

8 consecutive transmembrane segments (helical) span residues M15–Y35, F82–I102, V115–G135, L161–V181, L190–L210, Y240–F262, W278–V298, and I309–A329.

The protein belongs to the complex I subunit 1 family. In terms of assembly, NDH-1 is composed of at least 14 different subunits, Nqo1 to Nqo14. The complex has a L-shaped structure, with the hydrophobic arm (subunits Nqo7, Nqo8, Nqo10 to Nqo14) embedded in the inner membrane and the hydrophilic peripheral arm (subunits Nqo1 to Nqo6, Nqo9) protruding into the bacterial cytoplasm. The hydrophilic domain contains all the redox centers. NADH-quinone oxidoreductase forms a supercomplex with ubiquinol-cytochrome c reductase complex (complex III or cytochrome b-c1 complex) and cytochrome c oxidase (complex IV), which stabilizes the NADH-quinone oxidoreductase complex.

It localises to the cell inner membrane. It catalyses the reaction a quinone + NADH + 5 H(+)(in) = a quinol + NAD(+) + 4 H(+)(out). In terms of biological role, NDH-1 shuttles electrons from NADH, via FMN and iron-sulfur (Fe-S) centers, to quinones in the respiratory chain. The immediate electron acceptor for the enzyme in this species is believed to be ubiquinone. Couples the redox reaction to proton translocation (for every two electrons transferred, four hydrogen ions are translocated across the cytoplasmic membrane), and thus conserves the redox energy in a proton gradient. This subunit may bind ubiquinone. This Paracoccus denitrificans (strain Pd 1222) protein is NADH-quinone oxidoreductase subunit H.